The following is a 145-amino-acid chain: Superoxide dismutase [Mn/Fe] (145 aa).

Residues His10 and His64 each contribute to the Fe(3+) site. Residues His10 and His64 each contribute to the Mn(2+) site.

Belongs to the iron/manganese superoxide dismutase family. Mn(2+) serves as cofactor. It depends on Fe(3+) as a cofactor.

The enzyme catalyses 2 superoxide + 2 H(+) = H2O2 + O2. Its function is as follows. Destroys superoxide anion radicals which are normally produced within the cells and which are toxic to biological systems. Catalyzes the dismutation of superoxide anion radicals into O2 and H2O2 by successive reduction and oxidation of the transition metal ion at the active site. This is Superoxide dismutase [Mn/Fe] (sodA) from Streptococcus parasanguinis.